The chain runs to 598 residues: Chaperone protein DnaK (598 aa).

Thr180 carries the phosphothreonine; by autocatalysis modification.

It belongs to the heat shock protein 70 family.

Its function is as follows. Acts as a chaperone. In Thermosipho africanus (strain TCF52B), this protein is Chaperone protein DnaK.